Here is a 389-residue protein sequence, read N- to C-terminus: Phosphoglycerate kinase (389 aa).

Substrate is bound by residues 21 to 23 (DLN), Arg36, 59 to 62 (HLGR), Arg112, and Arg145. Residues Lys196, Glu318, and 344 to 347 (GGDS) contribute to the ATP site.

It belongs to the phosphoglycerate kinase family. In terms of assembly, monomer.

Its subcellular location is the cytoplasm. The enzyme catalyses (2R)-3-phosphoglycerate + ATP = (2R)-3-phospho-glyceroyl phosphate + ADP. It participates in carbohydrate degradation; glycolysis; pyruvate from D-glyceraldehyde 3-phosphate: step 2/5. The polypeptide is Phosphoglycerate kinase (Desulfovibrio desulfuricans (strain ATCC 27774 / DSM 6949 / MB)).